Reading from the N-terminus, the 226-residue chain is ATP synthase F(0) complex subunit a (226 aa).

A run of 6 helical transmembrane segments spans residues 5–25, 68–88, 97–117, 136–156, 179–199, and 201–221; these read LFAP…LIII, WSLM…LGML, QLSM…ATGF, FLIP…PVAL, LVLM…LALL, and ILEF…VSLY.

This sequence belongs to the ATPase A chain family. As to quaternary structure, component of the ATP synthase complex composed at least of ATP5F1A/subunit alpha, ATP5F1B/subunit beta, ATP5MC1/subunit c (homooctomer), MT-ATP6/subunit a, MT-ATP8/subunit 8, ATP5ME/subunit e, ATP5MF/subunit f, ATP5MG/subunit g, ATP5MK/subunit k, ATP5MJ/subunit j, ATP5F1C/subunit gamma, ATP5F1D/subunit delta, ATP5F1E/subunit epsilon, ATP5PF/subunit F6, ATP5PB/subunit b, ATP5PD/subunit d, ATP5PO/subunit OSCP. ATP synthase complex consists of a soluble F(1) head domain (subunits alpha(3) and beta(3)) - the catalytic core - and a membrane F(0) domain - the membrane proton channel (subunits c, a, 8, e, f, g, k and j). These two domains are linked by a central stalk (subunits gamma, delta, and epsilon) rotating inside the F1 region and a stationary peripheral stalk (subunits F6, b, d, and OSCP). Interacts with DNAJC30; interaction is direct.

It localises to the mitochondrion inner membrane. The enzyme catalyses H(+)(in) = H(+)(out). Subunit a, of the mitochondrial membrane ATP synthase complex (F(1)F(0) ATP synthase or Complex V) that produces ATP from ADP in the presence of a proton gradient across the membrane which is generated by electron transport complexes of the respiratory chain. ATP synthase complex consist of a soluble F(1) head domain - the catalytic core - and a membrane F(1) domain - the membrane proton channel. These two domains are linked by a central stalk rotating inside the F(1) region and a stationary peripheral stalk. During catalysis, ATP synthesis in the catalytic domain of F(1) is coupled via a rotary mechanism of the central stalk subunits to proton translocation. With the subunit c (ATP5MC1), forms the proton-conducting channel in the F(0) domain, that contains two crucial half-channels (inlet and outlet) that facilitate proton movement from the mitochondrial intermembrane space (IMS) into the matrix. Protons are taken up via the inlet half-channel and released through the outlet half-channel, following a Grotthuss mechanism. This is ATP synthase F(0) complex subunit a from Balaenoptera musculus (Blue whale).